We begin with the raw amino-acid sequence, 228 residues long: MEKQNIAVILARQNSKGLPLKNLRKMNGISLLGHTINAAISSKCFDRIIVSTDGGLIAEEAKNFGVEVVLRPAELASDTASSISGVIHALETIGSNSGTVTLLQPTSPLRTGAHIREAFSLFDEKIKGSVVSACPMEHHPLKTLLQINNGEYAPMRHLSDLEQPRQQLPQAFRPNGAIYINDTASLIANNCFFIAPTKLYIMSHQDSIDIDTELDLQQAENILNHKES.

This sequence belongs to the CMP-NeuNAc synthase family.

It localises to the cytoplasm. The enzyme catalyses an N-acylneuraminate + CTP = a CMP-N-acyl-beta-neuraminate + diphosphate. The sequence is that of N-acylneuraminate cytidylyltransferase (neuA) from Neisseria meningitidis serogroup B (strain ATCC BAA-335 / MC58).